We begin with the raw amino-acid sequence, 550 residues long: Dihydroxy-acid dehydratase (550 aa).

D81 contacts Mg(2+). C122 provides a ligand contact to [2Fe-2S] cluster. 2 residues coordinate Mg(2+): D123 and K124. K124 bears the N6-carboxylysine mark. A [2Fe-2S] cluster-binding site is contributed by C194. A Mg(2+)-binding site is contributed by E442. S467 functions as the Proton acceptor in the catalytic mechanism.

It belongs to the IlvD/Edd family. As to quaternary structure, homodimer. [2Fe-2S] cluster serves as cofactor. It depends on Mg(2+) as a cofactor.

It catalyses the reaction (2R)-2,3-dihydroxy-3-methylbutanoate = 3-methyl-2-oxobutanoate + H2O. The catalysed reaction is (2R,3R)-2,3-dihydroxy-3-methylpentanoate = (S)-3-methyl-2-oxopentanoate + H2O. It functions in the pathway amino-acid biosynthesis; L-isoleucine biosynthesis; L-isoleucine from 2-oxobutanoate: step 3/4. The protein operates within amino-acid biosynthesis; L-valine biosynthesis; L-valine from pyruvate: step 3/4. Functionally, functions in the biosynthesis of branched-chain amino acids. Catalyzes the dehydration of (2R,3R)-2,3-dihydroxy-3-methylpentanoate (2,3-dihydroxy-3-methylvalerate) into 2-oxo-3-methylpentanoate (2-oxo-3-methylvalerate) and of (2R)-2,3-dihydroxy-3-methylbutanoate (2,3-dihydroxyisovalerate) into 2-oxo-3-methylbutanoate (2-oxoisovalerate), the penultimate precursor to L-isoleucine and L-valine, respectively. In Methanoregula boonei (strain DSM 21154 / JCM 14090 / 6A8), this protein is Dihydroxy-acid dehydratase.